Consider the following 299-residue polypeptide: UBX domain-containing protein 1 (299 aa).

Disordered stretches follow at residues 39–61 (AGVP…SGAP), 127–176 (KAKL…NEDE), and 191–218 (EARK…APPK). Positions 46–61 (DAPAQAAPGAADSGAP) are enriched in low complexity. Positions 111–179 (AKVLEIREKI…REKNEDEIAR (69 aa)) form a coiled coil. The span at 128–176 (AKLEAEENREKEKKRREDGKAMISHKEAARDREIREAAQDRRREKNEDE) shows a compositional bias: basic and acidic residues. Residues 201–213 (PVPEAKPAPSAAP) show a composition bias toward low complexity. One can recognise a UBX domain in the interval 218 to 295 (KDYSTTTLQF…NLVPSANVIL (78 aa)).

In terms of assembly, interacts with cdc-48.1 (via N-terminus) and cdc-48.2 (via N-terminus) in vitro; the interaction with cdc-48.1 is not detected in vivo. In terms of tissue distribution, expressed in the germline (at protein level). Expressed in spermatocytes but not in mature sperm (at protein level). Ubiquitously expressed. Predominantly expressed in the spermatheca.

It localises to the cytoplasm. It is found in the perinuclear region. Functionally, ubiquitin-binding protein which acts as an adapter for ATPase cdc-48.1 and/or cdc-48.2, conferring substrate specificity. Together with ubxn-2 and ubxn-3, plays a role in hermaphrodite spermatogenesis probably by promoting the degradation of sex determination terminal factor tra-1. This chain is UBX domain-containing protein 1, found in Caenorhabditis elegans.